A 683-amino-acid chain; its full sequence is Glycine--tRNA ligase beta subunit (683 aa).

The protein belongs to the class-II aminoacyl-tRNA synthetase family. Tetramer of two alpha and two beta subunits.

It is found in the cytoplasm. The enzyme catalyses tRNA(Gly) + glycine + ATP = glycyl-tRNA(Gly) + AMP + diphosphate. The polypeptide is Glycine--tRNA ligase beta subunit (Pseudomonas putida (strain GB-1)).